A 255-amino-acid chain; its full sequence is Cytochrome b561 and DOMON domain-containing protein At5g48750 (255 aa).

A signal peptide spans Met-1–Thr-27. The DOMON domain maps to Leu-54–Gly-169. A Cytochrome b561 domain is found at Arg-176–Leu-255. Residues Ile-216–Ala-236 traverse the membrane as a helical segment.

Its subcellular location is the membrane. This chain is Cytochrome b561 and DOMON domain-containing protein At5g48750, found in Arabidopsis thaliana (Mouse-ear cress).